Reading from the N-terminus, the 214-residue chain is Phosphatidylcholine transfer protein (214 aa).

N-acetylmethionine is present on M1. The START domain maps to 1–212 (MAGPAAHFSD…MVKACQNYHK (212 aa)). Residues Y72 and R78 each coordinate a 1,2-diacyl-sn-glycero-3-phosphocholine. S139 carries the post-translational modification Phosphoserine. An a 1,2-diacyl-sn-glycero-3-phosphocholine-binding site is contributed by Q157.

As to quaternary structure, interacts with ACOT13/THEM2.

The protein resides in the cytoplasm. Functionally, lipid transfer protein that promotes intermembrane transfer of phosphatidylcholines but no other phospholipids. Binds a single lipid molecule. May play a role in hepatocellular selection and transport of phosphatidylcholines during bile formation. The sequence is that of Phosphatidylcholine transfer protein (Pctp) from Rattus norvegicus (Rat).